The sequence spans 493 residues: Neisserial heparin binding antigen (493 aa).

Positions Met1–Ala22 are cleaved as a signal peptide. The N-palmitoyl cysteine moiety is linked to residue Cys23. Cys23 is lipidated: S-diacylglycerol cysteine. The segment at Gly27 to Asn206 is disordered. Positions Ser48–Ala58 are enriched in basic and acidic residues. Residues Pro59–Gln75 are compositionally biased toward low complexity. Polar residues-rich tracts occupy residues Asp106–Pro123 and Met132–Asn147. The segment covering Ala165 to Gly188 has biased composition (low complexity). Residues Arg301 to Ser311 carry the Arg-rich motif motif.

The protein belongs to the NHBA family. In terms of assembly, the C-terminal beta-barrel forms a monomer. Cleaved in vivo by the Neisserial phase-variable autotransporter/serine protease NalP to give 2 fragments. The N-terminus remains in the cell outer membrane while the C-terminus (beginning on Ser-298) is soluble; this soluble fragment is called C2. Cleaved in vitro by human lactoferrin (LTF, between Arg-310 and Ser-311), this fragment is called C1. Recombinant and cell surface protein is cleaved by human saliva kallikrein (KLK1) between Ser-308 and Arg-309; in saliva kallikrein is more active on NHBA than lactoferrin. Human plasma kallikrein (KLKB1) cleaves in a similar manner to KLK1.

The protein localises to the cell outer membrane. Functionally, a major human immunogenic protein detected in patients recovering from meningitidis, where it induces bactericidal antibodies. Binds human cells, heparin and heparan sulfate proteoglycan in vitro via the Arg-rich motif. Heparin-binding to this protein protects bacteria against killing by bactericidal antibodies (serum killing). The bacteria binds a number of human extracellular sialyated and/or sulfated glycans via this protein, including chondroitin sulfate, heparin and ganglioside GT3. Whole protein binds DNA. Its function is as follows. Plays a role in extracellular-DNA (eDNA) mediated biofilm formation. In some strains (including cc32 strain H44/76 but not cc11 strain B16B6) eDNA stimulates biofilm formation. When NHBA is not processed by NalP, biofilm formation increases. This is probably because the number of positively charged, NHBA- and IgA-derived DNA-binding peptides on the cell surface rises, resulting in increased DNA-binding peptides and increased biofilm formation. The protein is Neisserial heparin binding antigen of Neisseria meningitidis serogroup B / serotype 15 (strain H44/76).